Consider the following 295-residue polypeptide: Chromatin modification-related protein YNG2 (295 aa).

Residues 151–208 form a disordered region; that stretch reads NGTAGSGSSSGRKRPASSSSANGKGQKRKQQKKERSRSHQRAGTVSRDVSPNAGIGRD. Residues 156 to 171 are compositionally biased toward low complexity; it reads SGSSSGRKRPASSSSA. Basic residues predominate over residues 175 to 190; the sequence is GQKRKQQKKERSRSHQ. The segment at 233–282 adopts a PHD-type zinc-finger fold; that stretch reads QLYCFCQRVSYGEMVACDGPNCKYEWFHYSCVNLTEPPKGQWYCPECRLE. Residues Cys-236, Cys-238, Cys-249, Cys-254, His-260, Cys-263, Cys-276, and Cys-279 each contribute to the Zn(2+) site.

The protein belongs to the ING family. Interacts with H3K4me3 and to a lesser extent with H3K4me2. Component of the NuA4 histone acetyltransferase complex.

The protein localises to the nucleus. In terms of biological role, component of the NuA4 histone acetyltransferase complex which is involved in transcriptional activation of selected genes principally by acetylation of nucleosomal histone H4 and H2A. The NuA4 complex is also involved in DNA repair. Involved in cell cycle progression and meiosis. The sequence is that of Chromatin modification-related protein YNG2 (YNG2) from Kluyveromyces lactis (strain ATCC 8585 / CBS 2359 / DSM 70799 / NBRC 1267 / NRRL Y-1140 / WM37) (Yeast).